Reading from the N-terminus, the 285-residue chain is RNase adapter protein RapZ (285 aa).

An ATP-binding site is contributed by glycine 8–serine 15. Aspartate 56 to asparagine 59 is a GTP binding site. The segment at arginine 266 to serine 285 is RNA-binding.

It belongs to the RapZ-like family. RapZ subfamily. Homotrimer.

Its function is as follows. Modulates the synthesis of GlmS, by affecting the processing and stability of the regulatory small RNA GlmZ. When glucosamine-6-phosphate (GlcN6P) concentrations are high in the cell, RapZ binds GlmZ and targets it to cleavage by RNase E. Consequently, GlmZ is inactivated and unable to activate GlmS synthesis. Under low GlcN6P concentrations, RapZ is sequestered and inactivated by an other regulatory small RNA, GlmY, preventing GlmZ degradation and leading to synthesis of GlmS. This chain is RNase adapter protein RapZ, found in Pectobacterium atrosepticum (strain SCRI 1043 / ATCC BAA-672) (Erwinia carotovora subsp. atroseptica).